The primary structure comprises 81 residues: Sulfur carrier protein TusA (81 aa).

Cys-19 (cysteine persulfide intermediate) is an active-site residue.

Belongs to the sulfur carrier protein TusA family. In terms of assembly, interacts with IscS.

It localises to the cytoplasm. Its pathway is tRNA modification. Sulfur carrier protein involved in sulfur trafficking in the cell. Part of a sulfur-relay system required for 2-thiolation during synthesis of 2-thiouridine of the modified wobble base 5-methylaminomethyl-2-thiouridine (mnm(5)s(2)U) in tRNA. Interacts with IscS and stimulates its cysteine desulfurase activity. Accepts an activated sulfur from IscS, which is then transferred to TusD, and thus determines the direction of sulfur flow from IscS to 2-thiouridine formation. Also appears to be involved in sulfur transfer for the biosynthesis of molybdopterin. The sequence is that of Sulfur carrier protein TusA from Enterobacter sp. (strain 638).